We begin with the raw amino-acid sequence, 292 residues long: Ribosome-inactivating protein saporin-2 (292 aa).

An N-terminal signal peptide occupies residues 1–24 (MKIYVVATIAWILLQFSAWTTTDA). Glutamate 200 is an active-site residue.

It belongs to the ribosome-inactivating protein family. Type 1 RIP subfamily.

It catalyses the reaction Endohydrolysis of the N-glycosidic bond at one specific adenosine on the 28S rRNA.. Functionally, ribosome-inactivating protein of type 1, inhibits protein synthesis in animal cells. Useful as immunotoxin for pharmacological applications. The protein is Ribosome-inactivating protein saporin-2 (SAP2) of Saponaria officinalis (Common soapwort).